The chain runs to 254 residues: Proteasome subunit alpha type-7 (254 aa).

The O-linked (GlcNAc) serine glycan is linked to Ser136. The residue at position 159 (Tyr159) is a Phosphotyrosine. At Lys233 the chain carries N6-acetyllysine.

Belongs to the peptidase T1A family. As to quaternary structure, the 26S proteasome consists of a 20S proteasome core and two 19S regulatory subunits. The 20S proteasome core is a barrel-shaped complex made of 28 subunits that are arranged in four stacked rings. The two outer rings are each formed by seven alpha subunits, and the two inner rings are formed by seven beta subunits. The proteolytic activity is exerted by three beta-subunits PSMB5, PSMB6 and PSMB7. PSMA7 interacts directly with the PSMG1-PSMG2 heterodimer which promotes 20S proteasome assembly. Interacts with HIF1A. Interacts with RAB7A. Interacts with PRKN. Interacts with ABL1 and ABL2. Interacts with EMAP2. Interacts with MAVS. In terms of tissue distribution, ubiquitous.

The protein resides in the cytoplasm. Its subcellular location is the nucleus. In terms of biological role, component of the 20S core proteasome complex involved in the proteolytic degradation of most intracellular proteins. This complex plays numerous essential roles within the cell by associating with different regulatory particles. Associated with two 19S regulatory particles, forms the 26S proteasome and thus participates in the ATP-dependent degradation of ubiquitinated proteins. The 26S proteasome plays a key role in the maintenance of protein homeostasis by removing misfolded or damaged proteins that could impair cellular functions, and by removing proteins whose functions are no longer required. Associated with the PA200 or PA28, the 20S proteasome mediates ubiquitin-independent protein degradation. This type of proteolysis is required in several pathways including spermatogenesis (20S-PA200 complex) or generation of a subset of MHC class I-presented antigenic peptides (20S-PA28 complex). Inhibits the transactivation function of HIF-1A under both normoxic and hypoxia-mimicking conditions. The interaction with EMAP2 increases the proteasome-mediated HIF-1A degradation under the hypoxic conditions. Plays a role in hepatitis C virus internal ribosome entry site-mediated translation. Mediates nuclear translocation of the androgen receptor (AR) and thereby enhances androgen-mediated transactivation. Promotes MAVS degradation and thereby negatively regulates MAVS-mediated innate immune response. The sequence is that of Proteasome subunit alpha type-7 (Psma7) from Rattus norvegicus (Rat).